Here is a 121-residue protein sequence, read N- to C-terminus: Protein TusC (121 aa).

This sequence belongs to the DsrF/TusC family. As to quaternary structure, heterohexamer, formed by a dimer of trimers. The hexameric TusBCD complex contains 2 copies each of TusB, TusC and TusD. The TusBCD complex interacts with TusE.

It is found in the cytoplasm. Part of a sulfur-relay system required for 2-thiolation of 5-methylaminomethyl-2-thiouridine (mnm(5)s(2)U) at tRNA wobble positions. This chain is Protein TusC, found in Yersinia enterocolitica serotype O:8 / biotype 1B (strain NCTC 13174 / 8081).